The following is a 101-amino-acid chain: NAD(P)H-quinone oxidoreductase subunit 4L, chloroplastic (101 aa).

3 helical membrane-spanning segments follow: residues Met2–Ile22, Met32–Phe52, and Ile61–Val81.

It belongs to the complex I subunit 4L family. NDH is composed of at least 16 different subunits, 5 of which are encoded in the nucleus.

It localises to the plastid. Its subcellular location is the chloroplast thylakoid membrane. It carries out the reaction a plastoquinone + NADH + (n+1) H(+)(in) = a plastoquinol + NAD(+) + n H(+)(out). The catalysed reaction is a plastoquinone + NADPH + (n+1) H(+)(in) = a plastoquinol + NADP(+) + n H(+)(out). NDH shuttles electrons from NAD(P)H:plastoquinone, via FMN and iron-sulfur (Fe-S) centers, to quinones in the photosynthetic chain and possibly in a chloroplast respiratory chain. The immediate electron acceptor for the enzyme in this species is believed to be plastoquinone. Couples the redox reaction to proton translocation, and thus conserves the redox energy in a proton gradient. The polypeptide is NAD(P)H-quinone oxidoreductase subunit 4L, chloroplastic (Lotus japonicus (Lotus corniculatus var. japonicus)).